The sequence spans 70 residues: Large ribosomal subunit protein uL29 (70 aa).

Belongs to the universal ribosomal protein uL29 family.

The polypeptide is Large ribosomal subunit protein uL29 (Rickettsia bellii (strain OSU 85-389)).